The sequence spans 304 residues: MLTDKTIIVSLTSRLFADEITKLQKKIGSILPLQDPHKLQSLDTLGLNAVCSRDVFPDYVHMFSYLSKCTLAILEEVNPDNLILTRLDPSETYQIKNVYEPMFQWDGFSNLTVIPPVFGRQQATVTLESNGFDLVFPSVVPSDLAQAIIGKLLLYNLYSRLVESDPEINIEEVNMYTTNVTHMGRHYVLDINHNNPNEALKSLDDLAVYTCILSALIPRACLRVLTILMRHDQHELLDVFRGIVPREVYEIDANALSIGDDITRMTTFITYLQSLSSIFNLGAKLHLSSYASETQTATCWISYC.

It belongs to the herpesviridae TRX2 protein family. In terms of assembly, interacts with TRX1 and major capisd protein/MCP.

It localises to the virion. Its subcellular location is the host nucleus. Its function is as follows. Structural component of the T=16 icosahedral capsid. The capsid is composed of pentamers and hexamers of major capsid protein/MCP, which are linked together by heterotrimers called triplexes. These triplexes are formed by a single molecule of triplex protein 1/TRX1 and two copies of triplex protein 2/TRX2. Additionally, TRX1 is required for efficient transport of TRX2 to the nucleus, which is the site of capsid assembly. This is Triplex capsid protein 2 from Saimiri sciureus (Common squirrel monkey).